The sequence spans 261 residues: Protein FAM216A (261 aa).

The tract at residues 1–52 (MPSRCPGVAGPPALARTEGSEGSAGQSYHQNSKGTGEQHKAERIKEGHRMSS) is disordered. Over residues 23 to 35 (SAGQSYHQNSKGT) the composition is skewed to polar residues. Residues 36 to 49 (GEQHKAERIKEGHR) show a composition bias toward basic and acidic residues.

This sequence belongs to the FAM216 family.

The polypeptide is Protein FAM216A (Fam216a) (Rattus norvegicus (Rat)).